Reading from the N-terminus, the 286-residue chain is Pantothenate synthetase (286 aa).

30–37 (MGNLHAGH) provides a ligand contact to ATP. Histidine 37 serves as the catalytic Proton donor. Glutamine 61 serves as a coordination point for (R)-pantoate. Glutamine 61 is a beta-alanine binding site. 149–152 (GEKD) contributes to the ATP binding site. Glutamine 155 lines the (R)-pantoate pocket. Residues valine 178 and 186 to 189 (MSSR) each bind ATP.

Belongs to the pantothenate synthetase family. In terms of assembly, homodimer.

Its subcellular location is the cytoplasm. The enzyme catalyses (R)-pantoate + beta-alanine + ATP = (R)-pantothenate + AMP + diphosphate + H(+). The protein operates within cofactor biosynthesis; (R)-pantothenate biosynthesis; (R)-pantothenate from (R)-pantoate and beta-alanine: step 1/1. Catalyzes the condensation of pantoate with beta-alanine in an ATP-dependent reaction via a pantoyl-adenylate intermediate. This is Pantothenate synthetase from Methylococcus capsulatus (strain ATCC 33009 / NCIMB 11132 / Bath).